The primary structure comprises 25 residues: GVVDILKGAAKDLAGHLASKVMNKI.

The residue at position 25 (isoleucine 25) is an Isoleucine amide.

As to expression, expressed by the skin glands.

Its subcellular location is the secreted. Has hemolytic and antibacterial activity. This Leptodactylus knudseni (Knudsen's thin-toed frog) protein is Ocellatin-K1.